Here is a 341-residue protein sequence, read N- to C-terminus: Uroporphyrinogen decarboxylase (341 aa).

Substrate is bound by residues 25 to 29 (RQAGR), F44, D74, Y151, S206, and H318.

It belongs to the uroporphyrinogen decarboxylase family. Homodimer.

It is found in the cytoplasm. The enzyme catalyses uroporphyrinogen III + 4 H(+) = coproporphyrinogen III + 4 CO2. It participates in porphyrin-containing compound metabolism; protoporphyrin-IX biosynthesis; coproporphyrinogen-III from 5-aminolevulinate: step 4/4. In terms of biological role, catalyzes the decarboxylation of four acetate groups of uroporphyrinogen-III to yield coproporphyrinogen-III. In Christiangramia forsetii (strain DSM 17595 / CGMCC 1.15422 / KT0803) (Gramella forsetii), this protein is Uroporphyrinogen decarboxylase.